Consider the following 155-residue polypeptide: Small ribosomal subunit protein uS7 (155 aa).

The protein belongs to the universal ribosomal protein uS7 family. In terms of assembly, part of the 30S ribosomal subunit. Contacts proteins S9 and S11.

In terms of biological role, one of the primary rRNA binding proteins, it binds directly to 16S rRNA where it nucleates assembly of the head domain of the 30S subunit. Is located at the subunit interface close to the decoding center, probably blocks exit of the E-site tRNA. The polypeptide is Small ribosomal subunit protein uS7 (Xanthomonas campestris pv. campestris (strain 8004)).